A 1421-amino-acid polypeptide reads, in one-letter code: Cytoadherence-linked asexual protein 3.2 (1421 aa).

Positions 1-24 (MVSFFKTPIIIFFFLLCLNEKVLC) are cleaved as a signal peptide. Cystine bridges form between Cys-335–Cys-363, Cys-409–Cys-415, Cys-519–Cys-547, and Cys-523–Cys-544. A helical transmembrane segment spans residues 1203 to 1223 (NFFMELANGFMYAFCFFAISQ). Cys-1352 and Cys-1355 are disulfide-bonded. Residues 1371–1413 (GDKNTNETTEIKKQTSTYIDTEKMNEADSADSDDEKDFDTPDN) form a disordered region. Residues 1398 to 1412 (DSADSDDEKDFDTPD) are compositionally biased toward acidic residues.

In terms of assembly, component of the RhopH complex. RhopH complex is at least composed of CLAG3.1/CLAG3.2, RhopH2 and RhopH3 with a 1:1:1 subunit stoichiometry. CLAG3.1/CLAG3.2 mediates subunit association through independent contacts with RhopH2 and RhopH3, which do not directly interact with one another. Interacts with RhopH2. Interacts with RhopH3.

It is found in the host cell membrane. Its subcellular location is the parasitophorous vacuole membrane. It localises to the host cytoplasm. The protein localises to the cytoplasmic vesicle. The protein resides in the secretory vesicle. It is found in the rhoptry. Functionally, participates in the formation of new permeability pathways in Plasmodium-infected erythrocytes enabling the uptake of nutrients from the blood plasma. The polypeptide is Cytoadherence-linked asexual protein 3.2 (Plasmodium falciparum).